Consider the following 181-residue polypeptide: UPF0397 protein STER_0346 (181 aa).

The next 5 membrane-spanning stretches (helical) occupy residues 11 to 31 (ATGI…IPIF), 45 to 65 (LFSV…GHAL), 72 to 92 (GNIS…IGLF), 109 to 129 (IWFN…VTPI), and 147 to 167 (FVAG…LLAI).

Belongs to the UPF0397 family.

The protein resides in the cell membrane. The protein is UPF0397 protein STER_0346 of Streptococcus thermophilus (strain ATCC BAA-491 / LMD-9).